The following is a 425-amino-acid chain: Formyl-CoA:oxalate CoA-transferase (425 aa).

Residues 17–18, Arg-38, 72–75, 96–98, Arg-104, and 136–139 each bind CoA; these read QS, LDTK, NFG, and KVYE. The Nucleophile role is filled by Asp-168. 247–249 is a substrate binding site; the sequence is GGQ.

Belongs to the CoA-transferase III family. Frc subfamily. Homodimer.

The enzyme catalyses formyl-CoA + oxalate = oxalyl-CoA + formate. Its pathway is metabolic intermediate degradation; oxalate degradation; CO(2) and formate from oxalate: step 1/2. Functionally, involved in the catabolism of oxalate and in the adapatation to low pH via the induction of the oxalate-dependent acid tolerance response (ATR). Catalyzes the transfer of the CoA moiety from formyl-CoA to oxalate. This chain is Formyl-CoA:oxalate CoA-transferase, found in Bradyrhizobium diazoefficiens (strain JCM 10833 / BCRC 13528 / IAM 13628 / NBRC 14792 / USDA 110).